The following is a 521-amino-acid chain: FAD-dependent monooxygenase DEP2 (521 aa).

The first 22 residues, 1–22 (MHDSPPFKVIIVGAGVTGLTLA), serve as a signal peptide directing secretion. 2 residues coordinate FAD: D36 and R109. N-linked (GlcNAc...) asparagine glycosylation is found at N139 and N220. FAD-binding residues include D310 and G323. A helical transmembrane segment spans residues 477–497 (ILVLWAGLWLAICFFHLVFSG). N515 is a glycosylation site (N-linked (GlcNAc...) asparagine).

The protein belongs to the paxM FAD-dependent monooxygenase family. The cofactor is FAD.

The protein resides in the membrane. It functions in the pathway polyketide biosynthesis. Its function is as follows. Part of the gene cluster that mediates the biosynthesis of depudecin, a highly oxidized eleven-carbon linear polyketide that acts as a histone deacetylase (HDAC) inhibitor and makes a small contribution to pathogenesis. The reducing polyketide synthase DEP5 is the central enzyme in depudecin biosynthesis by yielding the backbone polyketide chain. The monooxygenases DEP2 and DEP4, as well as the uncharacterized protein DEP1, then act as tailoring enzymes to modify the intermediate polyketide chain into depudecin. The protein is FAD-dependent monooxygenase DEP2 of Fusarium langsethiae.